The primary structure comprises 37 residues: Delta-amaurobitoxin-Pl1a (37 aa).

Disulfide bonds link C2–C18, C9–C23, C17–C33, and C25–C31. Residue S37 is modified to Serine amide.

The protein belongs to the neurotoxin 07 (Beta/delta-agtx) family. 02 (aga-3) subfamily. Expressed by the venom gland.

It is found in the secreted. Binds at site 4 of sodium channels (Nav) and inhibits the fast inactivation of cockroach channels. This toxin is active only on insects. Has a potent activity against S.litura larvae. This is Delta-amaurobitoxin-Pl1a from Pireneitega luctuosa (Tangled nest spider).